A 514-amino-acid polypeptide reads, in one-letter code: ATP synthase subunit alpha (514 aa).

Residue 170–177 coordinates ATP; sequence GDRQTGKT.

Belongs to the ATPase alpha/beta chains family. As to quaternary structure, F-type ATPases have 2 components, CF(1) - the catalytic core - and CF(0) - the membrane proton channel. CF(1) has five subunits: alpha(3), beta(3), gamma(1), delta(1), epsilon(1). CF(0) has three main subunits: a(1), b(2) and c(9-12). The alpha and beta chains form an alternating ring which encloses part of the gamma chain. CF(1) is attached to CF(0) by a central stalk formed by the gamma and epsilon chains, while a peripheral stalk is formed by the delta and b chains.

Its subcellular location is the cell inner membrane. It catalyses the reaction ATP + H2O + 4 H(+)(in) = ADP + phosphate + 5 H(+)(out). In terms of biological role, produces ATP from ADP in the presence of a proton gradient across the membrane. The alpha chain is a regulatory subunit. This Acidithiobacillus ferrooxidans (strain ATCC 23270 / DSM 14882 / CIP 104768 / NCIMB 8455) (Ferrobacillus ferrooxidans (strain ATCC 23270)) protein is ATP synthase subunit alpha.